The sequence spans 275 residues: Large ribosomal subunit protein uL2 (275 aa).

Residues Val223 to Lys275 are disordered.

It belongs to the universal ribosomal protein uL2 family. Part of the 50S ribosomal subunit. Forms a bridge to the 30S subunit in the 70S ribosome.

Its function is as follows. One of the primary rRNA binding proteins. Required for association of the 30S and 50S subunits to form the 70S ribosome, for tRNA binding and peptide bond formation. It has been suggested to have peptidyltransferase activity; this is somewhat controversial. Makes several contacts with the 16S rRNA in the 70S ribosome. The polypeptide is Large ribosomal subunit protein uL2 (Shewanella halifaxensis (strain HAW-EB4)).